Here is a 943-residue protein sequence, read N- to C-terminus: Tyrosine-protein kinase transmembrane receptor ROR2 (943 aa).

A signal peptide spans 1 to 33 (MARGSALPRRPLLCIPAVWAAAALLLSVSRTSG). The Extracellular portion of the chain corresponds to 34-403 (EVEVLDPNDP…CSPRDSSKMG (370 aa)). The Ig-like C2-type domain occupies 55 to 145 (PTLKGYFLNF…VATNGMKTIT (91 aa)). Asn-70 carries an N-linked (GlcNAc...) asparagine glycan. Cystine bridges form between Cys-83–Cys-135, Cys-174–Cys-239, Cys-182–Cys-232, Cys-223–Cys-264, Cys-252–Cys-300, Cys-256–Cys-286, Cys-316–Cys-394, Cys-337–Cys-377, and Cys-365–Cys-389. Residues 169 to 303 (HEDGFCQPYR…SPDAANCMRI (135 aa)) enclose the FZ domain. The N-linked (GlcNAc...) asparagine glycan is linked to Asn-188. The Kringle domain maps to 316–394 (CYNGSGMDYR…RMELCDVPSC (79 aa)). The N-linked (GlcNAc...) asparagine glycan is linked to Asn-318. Residues 404 to 424 (ILYILVPSIAIPLVIACLFFL) traverse the membrane as a helical segment. The Cytoplasmic segment spans residues 425 to 943 (VCMCRNKQKA…VDEAQVQLEA (519 aa)). Ser-469 and Ser-471 each carry sulfoserine; partial. Residues 473 to 746 (VRFMEELGED…PRFKDIHSRL (274 aa)) enclose the Protein kinase domain. ATP is bound by residues 479-487 (LGEDRFGKV) and Lys-507. Residue Asp-615 is the Proton acceptor of the active site. At Tyr-646 the chain carries Phosphotyrosine; by autocatalysis. Disordered regions lie at residues 757–796 (SSAQTSGASNTTQTSSLSTSPVSNVSNARYVGPKQKAPPF) and 850–931 (QVPP…DCDT). Composition is skewed to low complexity over residues 765–791 (SNTTQTSSLSTSPVSNVSNARYVGPKQ) and 857–872 (PKPSSHHSGSGSTSTG). Arg-785 is modified (asymmetric dimethylarginine). Polar residues predominate over residues 873–883 (YVTTAPSNTSM).

Belongs to the protein kinase superfamily. Tyr protein kinase family. ROR subfamily. Homodimer; promotes osteogenesis. Binds YWHAB. Interacts with WTIP. Interacts with ROR2. The cofactor is Mg(2+).

It is found in the cell membrane. The catalysed reaction is L-tyrosyl-[protein] + ATP = O-phospho-L-tyrosyl-[protein] + ADP + H(+). Tyrosine-protein kinase receptor which may be involved in the early formation of the chondrocytes. It seems to be required for cartilage and growth plate development. Phosphorylates YWHAB, leading to induction of osteogenesis and bone formation. In contrast, has also been shown to have very little tyrosine kinase activity in vitro. May act as a receptor for wnt ligand WNT5A which may result in the inhibition of WNT3A-mediated signaling. This chain is Tyrosine-protein kinase transmembrane receptor ROR2 (ROR2), found in Homo sapiens (Human).